Here is a 222-residue protein sequence, read N- to C-terminus: MLSRAACSTSRRLVPALSVLGSRQKHSLPDLPYDYGALEPHINAQIMQLHHSKHHAAYVNNLNVAEEKYREALEKGDVTAQIALQPALKFNGGGHINHSIFWTNLSPNGGGEPQGELLEAIKRDFGSFAKFKEKLTAVSVGVQGSGWGWLGFNKEQGRLQIAACSNQDPLQGTTGLIPLLGIDVWEHAYYLQYKNVRPDYLKAIWNVINWENVTARYTACSK.

The transit peptide at 1–24 (MLSRAACSTSRRLVPALSVLGSRQ) directs the protein to the mitochondrion. Residue His50 participates in Mn(2+) binding. Tyr58 carries the post-translational modification 3'-nitrotyrosine. An N6-acetyllysine; alternate mark is found at Lys68 and Lys75. Residues Lys68 and Lys75 each carry the N6-succinyllysine; alternate modification. His98 lines the Mn(2+) pocket. N6-acetyllysine; alternate is present on residues Lys122 and Lys130. N6-succinyllysine; alternate is present on residues Lys122 and Lys130. Residues Asp183 and His187 each contribute to the Mn(2+) site. The residue at position 202 (Lys202) is an N6-acetyllysine.

The protein belongs to the iron/manganese superoxide dismutase family. In terms of assembly, homotetramer. Mn(2+) is required as a cofactor. Post-translationally, nitrated under oxidative stress. Nitration coupled with oxidation inhibits the catalytic activity. Acetylation at Lys-122 decreases enzymatic activity. Deacetylated by SIRT3 upon exposure to ionizing radiations or after long fasting. In terms of processing, polyubiquitinated; leading to proteasomal degradation. Deubiquitinated by USP36 which increases protein stability.

The protein resides in the mitochondrion matrix. The enzyme catalyses 2 superoxide + 2 H(+) = H2O2 + O2. Functionally, destroys superoxide anion radicals which are normally produced within the cells and which are toxic to biological systems. This chain is Superoxide dismutase [Mn], mitochondrial (SOD2), found in Bos taurus (Bovine).